Here is a 296-residue protein sequence, read N- to C-terminus: Protein RarD (296 aa).

Residues 1-11 lie on the Cytoplasmic side of the membrane; sequence MDAKQTRQGVL. A helical membrane pass occupies residues 12–34; that stretch reads LALAAYFIWGIAPAYFKLIYYVP. The 128-residue stretch at 18–145 folds into the EamA domain; the sequence is FIWGIAPAYF…AICGVLVQLW (128 aa). Residues 35–37 are Periplasmic-facing; sequence ADE. The chain crosses the membrane as a helical span at residues 38 to 60; it reads ILTHRVIWSFFFMVVLMSICRQW. The Cytoplasmic segment spans residues 61–72; it reads SYLKTLIQTPQK. A helical membrane pass occupies residues 73–95; the sequence is IFMLAVSAVLIGGNWLLFIWAVN. Over 96–99 the chain is Periplasmic; sequence NHHM. The chain crosses the membrane as a helical span at residues 100–122; the sequence is LEASLGYFINPLVNIVLGMIFLG. Over 123–128 the chain is Cytoplasmic; that stretch reads ERFRRM. Residues 129–146 form a helical membrane-spanning segment; sequence QWLAVILAICGVLVQLWT. Residues 147–149 lie on the Periplasmic side of the membrane; it reads FGS. Residues 150-167 traverse the membrane as a helical segment; sequence LPIIALGLAFSFAFYGLV. Residues 168 to 179 are Cytoplasmic-facing; that stretch reads RKKIAVEAQTGM. A helical membrane pass occupies residues 180 to 197; that stretch reads LIETMWLLPVAAIYLFAI. Over 198-211 the chain is Periplasmic; it reads ADSSTSHMGQNPMS. The chain crosses the membrane as a helical span at residues 212–234; sequence LNLLLIAAGIVTTVPLLCFTAAA. Residues 235–238 lie on the Cytoplasmic side of the membrane; the sequence is TRLR. The helical transmembrane segment at 239–261 threads the bilayer; it reads LSTLGFFQYIGPTLMFLLAVTFY. At 262–270 the chain is on the periplasmic side; the sequence is GEKPGADKM. Residues 271–290 form a helical membrane-spanning segment; it reads VTFAFIWVALAIFVMDAIYT. The Cytoplasmic segment spans residues 291–296; the sequence is QRRTSK.

Belongs to the EamA transporter family.

It is found in the cell inner membrane. The polypeptide is Protein RarD (rarD) (Escherichia coli (strain K12)).